Here is a 100-residue protein sequence, read N- to C-terminus: UPF0213 protein FN1575 (100 aa).

Residues 1-77 form the GIY-YIG domain; the sequence is MAYYLYMLRC…KYIKKKKENI (77 aa).

This sequence belongs to the UPF0213 family.

This Fusobacterium nucleatum subsp. nucleatum (strain ATCC 25586 / DSM 15643 / BCRC 10681 / CIP 101130 / JCM 8532 / KCTC 2640 / LMG 13131 / VPI 4355) protein is UPF0213 protein FN1575.